Consider the following 409-residue polypeptide: Nucleoprotein (409 aa).

Disordered stretches follow at residues 1–32 (MASG…SSGN), 44–69 (LNSP…QQHG), 121–145 (ADVK…LRFS), 164–195 (RSGR…SEGD), and 238–259 (VDQV…DKMN). Positions 15–31 (PVIKLGGPKPPKVGSSG) are enriched in low complexity. The tract at residues 29 to 160 (SSGNASWFQA…GNFRWDFIPL (132 aa)) is RNA-binding. The 126-residue stretch at 31-156 (GNASWFQAIK…GGPDGNFRWD (126 aa)) folds into the CoV N NTD domain. Residues 164 to 179 (RSGRSTAASSAASSRA) are compositionally biased toward low complexity. 2 stretches are compositionally biased toward basic and acidic residues: residues 180-192 (PSRD…RSGS) and 247-259 (KGKE…DKMN). Serine 190 and serine 192 each carry phosphoserine; by host. The 117-residue stretch at 215–331 (TKAKADEMAH…QCVDGVGTRP (117 aa)) folds into the CoV N CTD domain. The segment at 226-333 (RYCKRTIPPG…VDGVGTRPKD (108 aa)) is dimerization. A disulfide bridge links cysteine 320 with cysteine 323. The segment at 326–409 (GVGTRPKDDE…GDSALGENEL (84 aa)) is disordered. A compositionally biased stretch (low complexity) spans 341 to 358 (RSSSRPATRTSSPALRQQ). Positions 368–384 (KQDDEVDKALTSDEERN) are enriched in basic and acidic residues. Threonine 378 is subject to Phosphothreonine; by host. The residue at position 379 (serine 379) is a Phosphoserine; by host.

This sequence belongs to the gammacoronavirus nucleocapsid protein family. As to quaternary structure, homooligomer. Both monomeric and oligomeric forms interact with RNA. Interacts with protein M. Interacts with NSP3; this interaction serves to tether the genome to the newly translated replicase-transcriptase complex at a very early stage of infection. In terms of processing, ADP-ribosylated. The ADP-ribosylation is retained in the virion during infection. Post-translationally, phosphorylated on serine and threonine residues.

It is found in the virion. The protein resides in the host endoplasmic reticulum-Golgi intermediate compartment. It localises to the host Golgi apparatus. In terms of biological role, packages the positive strand viral genome RNA into a helical ribonucleocapsid (RNP) and plays a fundamental role during virion assembly through its interactions with the viral genome and membrane protein M. Plays an important role in enhancing the efficiency of subgenomic viral RNA transcription as well as viral replication. The polypeptide is Nucleoprotein (Gallus gallus (Chicken)).